The chain runs to 362 residues: Phosphoserine aminotransferase (362 aa).

Position 42 (arginine 42) interacts with L-glutamate. Pyridoxal 5'-phosphate contacts are provided by residues 76 to 77, tryptophan 102, threonine 153, aspartate 174, and glutamine 197; that span reads AR. Lysine 198 is modified (N6-(pyridoxal phosphate)lysine). 239 to 240 is a pyridoxal 5'-phosphate binding site; it reads NT.

This sequence belongs to the class-V pyridoxal-phosphate-dependent aminotransferase family. SerC subfamily. Homodimer. The cofactor is pyridoxal 5'-phosphate.

Its subcellular location is the cytoplasm. The catalysed reaction is O-phospho-L-serine + 2-oxoglutarate = 3-phosphooxypyruvate + L-glutamate. The enzyme catalyses 4-(phosphooxy)-L-threonine + 2-oxoglutarate = (R)-3-hydroxy-2-oxo-4-phosphooxybutanoate + L-glutamate. The protein operates within amino-acid biosynthesis; L-serine biosynthesis; L-serine from 3-phospho-D-glycerate: step 2/3. It functions in the pathway cofactor biosynthesis; pyridoxine 5'-phosphate biosynthesis; pyridoxine 5'-phosphate from D-erythrose 4-phosphate: step 3/5. Functionally, catalyzes the reversible conversion of 3-phosphohydroxypyruvate to phosphoserine and of 3-hydroxy-2-oxo-4-phosphonooxybutanoate to phosphohydroxythreonine. The protein is Phosphoserine aminotransferase of Xenorhabdus nematophila (strain ATCC 19061 / DSM 3370 / CCUG 14189 / LMG 1036 / NCIMB 9965 / AN6).